The following is a 173-amino-acid chain: bZIP transcription factor 44 (173 aa).

Residues 1-65 are disordered; that stretch reads MNNKTEMGSS…SRMRKQKHLD (65 aa). Positions 8–22 are enriched in low complexity; that stretch reads GSSTSGNCSSVSTTG. Over residues 30-41 the composition is skewed to basic and acidic residues; sequence SDLRQRDLIDER. In terms of domain architecture, bZIP spans 39–102; sequence DERKRKRKQS…VTIEAENDIL (64 aa). The segment at 41-62 is basic motif; it reads RKRKRKQSNRESARRSRMRKQK. The leucine-zipper stretch occupies residues 67–81; the sequence is LTAQVTHLRKENAQI.

In terms of assembly, forms heterodimers with BZIP1, BZIP9, BZIP10, BZIP25 and BZIP63. Expressed in the micropylar endosperm and radicle tip in early germinating seeds.

It is found in the nucleus. Transcription factor that binds to the DNA G-box motif 5'-CACGTG-3' of MAN7 promoter. Involved in the positive regulation of seed germination through MAN7 gene activation. MAN7 is required for both, loosening of the micropylar endosperm, and rupture of the seed coat in germinating seeds. In Arabidopsis thaliana (Mouse-ear cress), this protein is bZIP transcription factor 44.